A 361-amino-acid polypeptide reads, in one-letter code: Phospho-N-acetylmuramoyl-pentapeptide-transferase (361 aa).

10 consecutive transmembrane segments (helical) span residues 25–45 (RGIL…PAVI), 73–93 (TMGG…WGDL), 98–118 (VWLV…DDWI), 139–159 (IFGL…AAIT), 168–188 (IALP…IVGF), 200–220 (GLAI…AYAS), 237–257 (AGEL…FLWF), 264–284 (VFMG…IAVI), 289–309 (MVLV…IIQV), and 339–359 (VIVR…ATLK).

Belongs to the glycosyltransferase 4 family. MraY subfamily. Mg(2+) serves as cofactor.

It is found in the cell inner membrane. It catalyses the reaction UDP-N-acetyl-alpha-D-muramoyl-L-alanyl-gamma-D-glutamyl-meso-2,6-diaminopimeloyl-D-alanyl-D-alanine + di-trans,octa-cis-undecaprenyl phosphate = di-trans,octa-cis-undecaprenyl diphospho-N-acetyl-alpha-D-muramoyl-L-alanyl-D-glutamyl-meso-2,6-diaminopimeloyl-D-alanyl-D-alanine + UMP. It functions in the pathway cell wall biogenesis; peptidoglycan biosynthesis. In terms of biological role, catalyzes the initial step of the lipid cycle reactions in the biosynthesis of the cell wall peptidoglycan: transfers peptidoglycan precursor phospho-MurNAc-pentapeptide from UDP-MurNAc-pentapeptide onto the lipid carrier undecaprenyl phosphate, yielding undecaprenyl-pyrophosphoryl-MurNAc-pentapeptide, known as lipid I. This is Phospho-N-acetylmuramoyl-pentapeptide-transferase from Xanthomonas oryzae pv. oryzae (strain PXO99A).